Reading from the N-terminus, the 38-residue chain is U9-ctenitoxin-Pk1a (38 aa).

4 cysteine pairs are disulfide-bonded: C2/C17, C9/C22, C16/C36, and C24/C34.

As to expression, expressed by the venom gland.

Its subcellular location is the secreted. This chain is U9-ctenitoxin-Pk1a, found in Phoneutria keyserlingi (Brazilian wandering spider).